Consider the following 150-residue polypeptide: Large ribosomal subunit protein bL9 (150 aa).

The protein belongs to the bacterial ribosomal protein bL9 family.

Functionally, binds to the 23S rRNA. The protein is Large ribosomal subunit protein bL9 of Leuconostoc mesenteroides subsp. mesenteroides (strain ATCC 8293 / DSM 20343 / BCRC 11652 / CCM 1803 / JCM 6124 / NCDO 523 / NBRC 100496 / NCIMB 8023 / NCTC 12954 / NRRL B-1118 / 37Y).